We begin with the raw amino-acid sequence, 195 residues long: Thymidine kinase (195 aa).

ATP-binding positions include 8–15 (GLMGSGKS) and 86–89 (DESQ). Residue Glu-87 is the Proton acceptor of the active site. Zn(2+)-binding residues include Cys-146, Cys-151, Cys-184, and His-187.

This sequence belongs to the thymidine kinase family. As to quaternary structure, homotetramer.

The protein localises to the cytoplasm. The catalysed reaction is thymidine + ATP = dTMP + ADP + H(+). This Bacillus subtilis subsp. natto protein is Thymidine kinase (tdk).